A 134-amino-acid chain; its full sequence is Small ribosomal subunit protein uS9 (134 aa).

A compositionally biased stretch (basic and acidic residues) spans 98–114; sequence SKQELKSHGFLTRDPRK. Residues 98–134 form a disordered region; the sequence is SKQELKSHGFLTRDPRKKERKKYGHKKARKSFQFSKR. The segment covering 115-134 has biased composition (basic residues); it reads KERKKYGHKKARKSFQFSKR.

It belongs to the universal ribosomal protein uS9 family.

The polypeptide is Small ribosomal subunit protein uS9 (Chlamydia caviae (strain ATCC VR-813 / DSM 19441 / 03DC25 / GPIC) (Chlamydophila caviae)).